Here is a 564-residue protein sequence, read N- to C-terminus: Pumilio homolog 9 (564 aa).

Positions 222–564 constitute a PUM-HD domain; it reads LEDTVLIGQG…KIFSKTILKK (343 aa). Pumilio repeat units lie at residues 249–284, 285–320, 321–359, 361–396, 397–432, 433–469, 470–501, and 502–539; these read EIYG…VILL, AIID…LIVS, VLTS…ALVK, GLKP…FVLE, AATK…RLVA, EISR…VQFR, MHYA…EIVR, and ELLC…KLVA.

Its subcellular location is the cytoplasm. In terms of biological role, sequence-specific RNA-binding protein that regulates translation and mRNA stability by binding the 3'-UTR of target mRNAs. This is Pumilio homolog 9 (APUM9) from Arabidopsis thaliana (Mouse-ear cress).